The following is a 379-amino-acid chain: UDP-4-amino-4-deoxy-L-arabinose--oxoglutarate aminotransferase (379 aa).

N6-(pyridoxal phosphate)lysine is present on K182.

This sequence belongs to the DegT/DnrJ/EryC1 family. ArnB subfamily. As to quaternary structure, homodimer. It depends on pyridoxal 5'-phosphate as a cofactor.

The catalysed reaction is UDP-4-amino-4-deoxy-beta-L-arabinose + 2-oxoglutarate = UDP-beta-L-threo-pentopyranos-4-ulose + L-glutamate. Its pathway is nucleotide-sugar biosynthesis; UDP-4-deoxy-4-formamido-beta-L-arabinose biosynthesis; UDP-4-deoxy-4-formamido-beta-L-arabinose from UDP-alpha-D-glucuronate: step 2/3. The protein operates within bacterial outer membrane biogenesis; lipopolysaccharide biosynthesis. Functionally, catalyzes the conversion of UDP-4-keto-arabinose (UDP-Ara4O) to UDP-4-amino-4-deoxy-L-arabinose (UDP-L-Ara4N). The modified arabinose is attached to lipid A and is required for resistance to polymyxin and cationic antimicrobial peptides. This chain is UDP-4-amino-4-deoxy-L-arabinose--oxoglutarate aminotransferase, found in Escherichia coli (strain K12 / DH10B).